The primary structure comprises 344 residues: GTPase Obg (344 aa).

The Obg domain maps to M1–I159. The 168-residue stretch at A160 to D327 folds into the OBG-type G domain. Residues G166 to S173, F191 to H195, D212 to G215, N279 to D282, and S308 to A310 each bind GTP. Positions 173 and 193 each coordinate Mg(2+).

The protein belongs to the TRAFAC class OBG-HflX-like GTPase superfamily. OBG GTPase family. Monomer. Mg(2+) is required as a cofactor.

It localises to the cytoplasm. In terms of biological role, an essential GTPase which binds GTP, GDP and possibly (p)ppGpp with moderate affinity, with high nucleotide exchange rates and a fairly low GTP hydrolysis rate. Plays a role in control of the cell cycle, stress response, ribosome biogenesis and in those bacteria that undergo differentiation, in morphogenesis control. This is GTPase Obg from Ruegeria pomeroyi (strain ATCC 700808 / DSM 15171 / DSS-3) (Silicibacter pomeroyi).